Consider the following 275-residue polypeptide: Dermonecrotic toxin SpeSicTox-betaIIA2iii (275 aa).

His5 is a catalytic residue. The Mg(2+) site is built by Glu25 and Asp27. The Nucleophile role is filled by His41. Disulfide bonds link Cys45/Cys51 and Cys47/Cys190. Asp85 contacts Mg(2+).

The protein belongs to the arthropod phospholipase D family. Class II subfamily. Mg(2+) serves as cofactor. As to expression, expressed by the venom gland.

It is found in the secreted. It catalyses the reaction an N-(acyl)-sphingosylphosphocholine = an N-(acyl)-sphingosyl-1,3-cyclic phosphate + choline. The catalysed reaction is an N-(acyl)-sphingosylphosphoethanolamine = an N-(acyl)-sphingosyl-1,3-cyclic phosphate + ethanolamine. The enzyme catalyses a 1-acyl-sn-glycero-3-phosphocholine = a 1-acyl-sn-glycero-2,3-cyclic phosphate + choline. It carries out the reaction a 1-acyl-sn-glycero-3-phosphoethanolamine = a 1-acyl-sn-glycero-2,3-cyclic phosphate + ethanolamine. In terms of biological role, dermonecrotic toxins cleave the phosphodiester linkage between the phosphate and headgroup of certain phospholipids (sphingolipid and lysolipid substrates), forming an alcohol (often choline) and a cyclic phosphate. This toxin acts on sphingomyelin (SM). It may also act on ceramide phosphoethanolamine (CPE), lysophosphatidylcholine (LPC) and lysophosphatidylethanolamine (LPE), but not on lysophosphatidylserine (LPS), and lysophosphatidylglycerol (LPG). It acts by transphosphatidylation, releasing exclusively cyclic phosphate products as second products. Induces dermonecrosis, hemolysis, increased vascular permeability, edema, inflammatory response, and platelet aggregation. This chain is Dermonecrotic toxin SpeSicTox-betaIIA2iii, found in Sicarius peruensis (Six-eyed sand spider).